Here is a 510-residue protein sequence, read N- to C-terminus: Arginine biosynthesis bifunctional protein ArgJ, mitochondrial (510 aa).

Residues 57–70 (TSTNEPSAATTNVP) show a composition bias toward polar residues. The segment at 57–76 (TSTNEPSAATTNVPHPQEAP) is disordered. Threonine 222, lysine 248, threonine 267, and glutamate 364 together coordinate substrate. The Nucleophile role is filled by threonine 267.

The protein belongs to the ArgJ family. In terms of assembly, heterodimer of an alpha and a beta chain. In terms of processing, the alpha and beta chains are autoproteolytically processed from a single precursor protein within the mitochondrion.

Its subcellular location is the mitochondrion matrix. It carries out the reaction N(2)-acetyl-L-ornithine + L-glutamate = N-acetyl-L-glutamate + L-ornithine. The catalysed reaction is L-glutamate + acetyl-CoA = N-acetyl-L-glutamate + CoA + H(+). Its pathway is amino-acid biosynthesis; L-arginine biosynthesis; L-ornithine and N-acetyl-L-glutamate from L-glutamate and N(2)-acetyl-L-ornithine (cyclic): step 1/1. It participates in amino-acid biosynthesis; L-arginine biosynthesis; N(2)-acetyl-L-ornithine from L-glutamate: step 1/4. Catalyzes two activities which are involved in the cyclic version of arginine biosynthesis: the synthesis of acetylglutamate from glutamate and acetyl-CoA, and of ornithine by transacetylation between acetylornithine and glutamate. The protein is Arginine biosynthesis bifunctional protein ArgJ, mitochondrial of Malassezia globosa (strain ATCC MYA-4612 / CBS 7966) (Dandruff-associated fungus).